The chain runs to 425 residues: MVIIMQFYKEENFKEMHGLRVPEDWEVVRIGDFIKYIKGKKPAVMVDEELEGYYPYLSTEYLRDGIASKFVKITNKEIIVNENDILLLWDGSNAGEIFLGKKGILSSTMVKLEQKNKIMDDLYLFYSLKLKESFLKSQTKGTGIPHVDKKIFENIKIPLPPLEEQKQIAKILSDFDNLIGTINKQIEVLNKAKKGMMKKLFTKGVFEHKSFKKSEIGEIPEDWEVVKLKEVVDIQSGKYFKYSEFCENGVKCLKIDNVGFGKIFWETVSFLPEDYLNKYPQLVLKSGDIVLALNRPIIGGKIKIGILKDIDEPAILYQRVGRFIFKSEKIDKQFLFYLLMSEYFKKELSKLLIGTDQPYIRTPVLLNIKIPLPHLEEQKAMAERLKSIDNLIEIKRKEKEQIEKAKKKIMNLLLTGKIRVKNLNF.

This sequence belongs to the type-I restriction system S methylase family. As to quaternary structure, the type I restriction/modification system is composed of three polypeptides R, M and S.

In terms of biological role, the specificity (S) subunit of a type I restriction enzyme; this subunit dictates DNA sequence specificity. The M and S subunits together form a methyltransferase (MTase) that methylates A-2 on the top and A-3 on the bottom strand of the sequence 5'-GAYN(5)GTAA-3'. In the presence of the R subunit the complex can also act as an endonuclease, binding to the same target sequence but cutting the DNA some distance from this site. Whether the DNA is cut or modified depends on the methylation state of the target sequence. When the target site is unmodified, the DNA is cut. When the target site is hemimethylated, the complex acts as a maintenance MTase modifying the DNA so that both strands become methylated. After locating a non-methylated recognition site, the enzyme complex serves as a molecular motor that translocates DNA in an ATP-dependent manner until a collision occurs that triggers cleavage. This chain is Type I restriction enzyme MjaVIII specificity subunit, found in Methanocaldococcus jannaschii (strain ATCC 43067 / DSM 2661 / JAL-1 / JCM 10045 / NBRC 100440) (Methanococcus jannaschii).